The primary structure comprises 145 residues: uncharacterized protein (145 aa).

It is found in the mitochondrion. This is an uncharacterized protein from Arabidopsis thaliana (Mouse-ear cress).